A 453-amino-acid chain; its full sequence is Frizzled/smoothened-like sans CRD protein G (453 aa).

Positions 1–24 are cleaved as a signal peptide; it reads MIYILKNFIIILFFLLIILKRIES. Over 25-89 the chain is Extracellular; the sequence is QSLPSLPSPT…PFFTLDEWNK (65 aa). N-linked (GlcNAc...) asparagine glycans are attached at residues Asn-49 and Asn-67. A helical membrane pass occupies residues 90 to 110; it reads FLYMSLVMGTISFLCGLFLLI. At 111–124 the chain is on the cytoplasmic side; sequence TYSPIVNKTHNRHT. Residues 125–145 traverse the membrane as a helical segment; it reads IGVMCMSFGVCLAMCSDMWNF. Residues 146–170 are Extracellular-facing; that stretch reads GSNFTDQKSICPSPGQYLTTSNSRC. An N-linked (GlcNAc...) asparagine glycan is attached at Asn-148. Residues 171 to 191 traverse the membrane as a helical segment; it reads LGSGIVLQFGGVFGFLNWTLL. Residues 192 to 209 lie on the Cytoplasmic side of the membrane; that stretch reads SFDLFMNIKGIITKNYDK. Residues 210-230 form a helical membrane-spanning segment; it reads YYFVATFIIAIIFTFVPIVND. Over 231–250 the chain is Extracellular; it reads QYSMSYIGLGCWLGSAVYQL. A helical membrane pass occupies residues 251–271; that stretch reads IFFWILLSICLIVSSVFIILI. The Cytoplasmic portion of the chain corresponds to 272-296; the sequence is LKEIYIIIKQSKQKTSLKGNIRPLL. Residues 297–317 form a helical membrane-spanning segment; it reads CITVTSFAFFYMFFYYISIVI. The Extracellular portion of the chain corresponds to 318-352; the sequence is EGDYYERILNEYTDCLMDPTKDVSECKFPRMSVAN. The helical transmembrane segment at 353 to 373 threads the bilayer; the sequence is EFVFLLCLRLLGIGAFIFYGI. Topologically, residues 374–453 are cytoplasmic; the sequence is NKEVKKIWLN…DDNFKPIIIK (80 aa).

The protein belongs to the G-protein coupled receptor Fz/Smo family.

It is found in the membrane. This is Frizzled/smoothened-like sans CRD protein G (fscG) from Dictyostelium discoideum (Social amoeba).